The primary structure comprises 498 residues: Protein translocase subunit SecY (498 aa).

A run of 10 helical transmembrane segments spans residues 23 to 43 (FVIS…ISVI), 65 to 87 (FDLF…VGIS), 124 to 144 (ITRF…IALI), 163 to 183 (AFYI…GDII), 191 to 211 (GITL…FIVM), 229 to 249 (AINF…ISFV), 281 to 301 (AAGV…ITIA), 322 to 342 (PVGI…YSYI), 382 to 402 (FIGA…SLVL), and 406 to 426 (TTLS…MELY). Over residues 478-488 (VEPTQDKKKNP) the composition is skewed to basic and acidic residues. Residues 478–498 (VEPTQDKKKNPSDPLEVSQLW) are disordered.

This sequence belongs to the SecY/SEC61-alpha family. Component of the Sec protein translocase complex. Heterotrimer consisting of SecY, SecE and SecG subunits. The heterotrimers can form oligomers, although 1 heterotrimer is thought to be able to translocate proteins. Interacts with the ribosome. Interacts with SecDF, and other proteins may be involved. Interacts with SecA.

Its subcellular location is the cell membrane. Functionally, the central subunit of the protein translocation channel SecYEG. Consists of two halves formed by TMs 1-5 and 6-10. These two domains form a lateral gate at the front which open onto the bilayer between TMs 2 and 7, and are clamped together by SecE at the back. The channel is closed by both a pore ring composed of hydrophobic SecY resides and a short helix (helix 2A) on the extracellular side of the membrane which forms a plug. The plug probably moves laterally to allow the channel to open. The ring and the pore may move independently. This is Protein translocase subunit SecY from Mycoplasmoides gallisepticum (strain R(low / passage 15 / clone 2)) (Mycoplasma gallisepticum).